A 396-amino-acid polypeptide reads, in one-letter code: Purine ribonucleoside efflux pump NepI (396 aa).

At 1–21 (MSEFIAENRGADAITRPNWSA) the chain is on the cytoplasmic side. A helical transmembrane segment spans residues 22 to 42 (VFSVAFCVACLIIVEFLPVSL). The Periplasmic portion of the chain corresponds to 43–54 (LTPMAQDLGISE). A helical transmembrane segment spans residues 55-75 (GVAGQSVTVTAFVAMFASLFI). Residues 76 to 85 (TQTIQATDRR) lie on the Cytoplasmic side of the membrane. The chain crosses the membrane as a helical span at residues 86-106 (YVVILFAVLLTLSCLLVSFAN). Position 107 (serine 107) is a topological domain, periplasmic. The helical transmembrane segment at 108-128 (FSLLLIGRACLGLALGGFWAM) threads the bilayer. Residues 129–147 (SASLTMRLVPPRTVPKALS) are Cytoplasmic-facing. The chain crosses the membrane as a helical span at residues 148–168 (VIFGAVSIALVIAAPLGSFLG). The Periplasmic portion of the chain corresponds to 169–175 (ELIGWRN). Residues 176-196 (VFNAAAVMGVLCIFWIIKSLP) traverse the membrane as a helical segment. Topologically, residues 197–215 (SLPGEPSHQKQNTFRLLQR) are cytoplasmic. The helical transmembrane segment at 216-236 (PGVMAGMIAIFMSFAGQFAFF) threads the bilayer. At 237–255 (TYIRPVYMNLAGFGVDGLT) the chain is on the periplasmic side. Residues 256–276 (LVLLSFGIASFIGTSLSSFIL) traverse the membrane as a helical segment. The Cytoplasmic portion of the chain corresponds to 277 to 281 (KRSVK). A helical transmembrane segment spans residues 282–302 (LALAGAPLILAVSALVLTLWG). At 303–305 (SDK) the chain is on the periplasmic side. A helical transmembrane segment spans residues 306-326 (IVATGVAIIWGLTFALVPVGW). Residues 327 to 343 (STWITRSLADQAEKAGS) are Cytoplasmic-facing. The chain crosses the membrane as a helical span at residues 344–364 (IQVAVIQLANTCGAAIGGYAL). Residues 365 to 366 (DN) are Periplasmic-facing. Residues 367–387 (IGLTSPLMLSGTLMLLTALLV) form a helical membrane-spanning segment. At 388 to 396 (TAKVKMKKS) the chain is on the cytoplasmic side.

The protein belongs to the major facilitator superfamily. DHA1 family. NepI (TC 2.A.1.2.26) subfamily.

Its subcellular location is the cell inner membrane. It carries out the reaction inosine(in) + H(+)(out) = inosine(out) + H(+)(in). The enzyme catalyses guanosine(in) + H(+)(out) = guanosine(out) + H(+)(in). Functionally, involved in the efflux of purine ribonucleosides, such as inosine and guanosine. The chain is Purine ribonucleoside efflux pump NepI from Shigella flexneri.